The following is a 139-amino-acid chain: ATP synthase epsilon chain (139 aa).

This sequence belongs to the ATPase epsilon chain family. As to quaternary structure, F-type ATPases have 2 components, CF(1) - the catalytic core - and CF(0) - the membrane proton channel. CF(1) has five subunits: alpha(3), beta(3), gamma(1), delta(1), epsilon(1). CF(0) has three main subunits: a, b and c.

Its subcellular location is the cell inner membrane. In terms of biological role, produces ATP from ADP in the presence of a proton gradient across the membrane. This is ATP synthase epsilon chain from Acinetobacter baylyi (strain ATCC 33305 / BD413 / ADP1).